A 160-amino-acid polypeptide reads, in one-letter code: Protransforming growth factor alpha (160 aa).

The N-terminal stretch at 1–23 is a signal peptide; that stretch reads MVPSAGQLALFALGIVLAACQAL. The propeptide at 24–39 is removed in mature form; it reads ENSTSPLSADPPVAAA. The Extracellular segment spans residues 24-98; it reads ENSTSPLSAD…AVVAASQKKQ (75 aa). Residue asparagine 25 is glycosylated (N-linked (GlcNAc...) asparagine). The EGF-like domain maps to 43–83; the sequence is HFNDCPDSHTQFCFHGTCRFLVQEDKPACVCHSGYVGARCE. Intrachain disulfides connect cysteine 47–cysteine 60, cysteine 55–cysteine 71, and cysteine 73–cysteine 82. A propeptide spans 90–160 (removed in mature form); it reads VVAASQKKQA…TACCHSETVV (71 aa). Residues 99–124 form a helical membrane-spanning segment; it reads AITALVVVSIVALAVLIITCVLIHCC. At 125–160 the chain is on the cytoplasmic side; that stretch reads QVRKHCEWCRALICRHEKPSALLKGRTACCHSETVV. 2 S-palmitoyl cysteine lipidation sites follow: cysteine 153 and cysteine 154.

In terms of assembly, interacts with the PDZ domains of MAGI3, SDCBP and SNTA1. The interaction with SDCBP, is required for the targeting to the cell surface. In the endoplasmic reticulum, in its immature form (i.e. with a prosegment and lacking full N-glycosylation), interacts with CNIH. In the Golgi apparatus, may form a complex with CNIH and GORASP2. Interacts (via cytoplasmic C-terminal domain) with NKD2. Isoform 1, isoform 3 and isoform 4 are expressed in keratinocytes and tumor-derived cell lines.

The protein localises to the secreted. Its subcellular location is the extracellular space. It localises to the cell membrane. Its function is as follows. TGF alpha is a mitogenic polypeptide that is able to bind to the EGF receptor/EGFR and to act synergistically with TGF beta to promote anchorage-independent cell proliferation in soft agar. This chain is Protransforming growth factor alpha (TGFA), found in Homo sapiens (Human).